We begin with the raw amino-acid sequence, 631 residues long: Transforming acidic coiled-coil-containing protein 3 (631 aa).

The residue at position 2 (Ser2) is an N-acetylserine. A Phosphoserine modification is found at Ser39. The span at 42 to 59 shows a compositional bias: polar residues; sequence ENVPPQSQAKATNVTFQT. Residues 42 to 70 form a disordered region; that stretch reads ENVPPQSQAKATNVTFQTPPRDPQTHRIL. Position 71 is a phosphoserine (Ser71). Necessary but not sufficient for spindle localization stretches follow at residues 311-366 and 384-631; these read EESF…PMPV and KPTE…MEKI. Residue Ser347 is modified to Phosphoserine; by AURKA. The disordered stretch occupies residues 363 to 385; sequence PMPVAPITNSTQDTEEESGSGKP. Positions 431–630 form a coiled coil; it reads QKDLDAVVNV…CDDLISKMEK (200 aa).

The protein belongs to the TACC family. Interacts with GCN5L2 and PCAF. The coiled coil C-terminal region interacts with AH receptor nuclear translocator protein (ARNT) and ARNT2. Interacts with CCDC100/CEP120. Interacts with CKAP5 independently of clathrin. Interacts with CKAP5 and clathrin forming the TACC3/ch-TOG/clathrin complex located at spindle inter-microtubules bridges; TACC3 (phosphorylated at Ser-347 by AURKA) and CLTC are proposed to form a composite microtubule interaction surface. As to expression, embryonically expressed.

It localises to the cytoplasm. The protein resides in the cytoskeleton. The protein localises to the microtubule organizing center. Its subcellular location is the centrosome. It is found in the spindle pole. Plays a role in the microtubule-dependent coupling of the nucleus and the centrosome. Involved in the processes that regulate centrosome-mediated interkinetic nuclear migration (INM) of neural progenitors. Acts as a component of the TACC3/ch-TOG/clathrin complex proposed to contribute to stabilization of kinetochore fibers of the mitotic spindle by acting as inter-microtubule bridge. The TACC3/ch-TOG/clathrin complex is required for the maintenance of kinetochore fiber tension. May be involved in the control of cell growth and differentiation. May have a role in embryonic development. In Mus musculus (Mouse), this protein is Transforming acidic coiled-coil-containing protein 3 (Tacc3).